The chain runs to 394 residues: Elongation factor Tu 1 (394 aa).

The tr-type G domain occupies 10–204 (KPHVNVGTIG…ALDSYIPEPE (195 aa)). A G1 region spans residues 19 to 26 (GHVDHGKT). 19–26 (GHVDHGKT) provides a ligand contact to GTP. Residue threonine 26 participates in Mg(2+) binding. The interval 60–64 (GITIN) is G2. The segment at 81–84 (DCPG) is G3. GTP-binding positions include 81–85 (DCPGH) and 136–139 (NKCD). Residues 136-139 (NKCD) form a G4 region. Positions 174–176 (SAL) are G5.

This sequence belongs to the TRAFAC class translation factor GTPase superfamily. Classic translation factor GTPase family. EF-Tu/EF-1A subfamily. As to quaternary structure, monomer.

It localises to the cytoplasm. The enzyme catalyses GTP + H2O = GDP + phosphate + H(+). Functionally, GTP hydrolase that promotes the GTP-dependent binding of aminoacyl-tRNA to the A-site of ribosomes during protein biosynthesis. The protein is Elongation factor Tu 1 of Shewanella sp. (strain MR-4).